A 763-amino-acid chain; its full sequence is Amine oxidase [copper-containing] 3 (763 aa).

Residues 1-5 (MNQKT) are Cytoplasmic-facing. Residues 6–26 (ILVLLILAVITIFALVCVLLV) traverse the membrane as a helical; Signal-anchor for type II membrane protein segment. The Extracellular segment spans residues 27 to 763 (GRGGDGGEPS…AFSHGGFSHN (737 aa)). The O-linked (GalNAc...) serine glycan is linked to serine 43. N-linked (GlcNAc...) asparagine glycosylation occurs at asparagine 137. Cysteine 198 and cysteine 199 are oxidised to a cystine. The O-linked (GalNAc...) threonine glycan is linked to threonine 212. N-linked (GlcNAc...) asparagine glycans are attached at residues asparagine 232 and asparagine 294. The Proton acceptor role is filled by aspartate 386. An intrachain disulfide couples cysteine 404 to cysteine 430. Tyrosine 471 acts as the Schiff-base intermediate with substrate; via topaquinone in catalysis. Tyrosine 471 is modified (2',4',5'-topaquinone). 2 residues coordinate Cu(2+): histidine 520 and histidine 522. 4 residues coordinate Ca(2+): aspartate 529, leucine 530, aspartate 531, and glutamate 572. Asparagine 592 carries N-linked (GlcNAc...) (complex) asparagine glycosylation. The N-linked (GlcNAc...) asparagine glycan is linked to asparagine 618. Residues glutamate 641, phenylalanine 663, and asparagine 665 each contribute to the Ca(2+) site. Residue asparagine 666 is glycosylated (N-linked (GlcNAc...) asparagine). Positions 667, 673, and 674 each coordinate Ca(2+). A glycan (O-linked (GlcNAc) threonine) is linked at threonine 679. Residue histidine 684 participates in Cu(2+) binding. A disulfide bridge connects residues cysteine 734 and cysteine 741.

The protein belongs to the copper/topaquinone oxidase family. Homodimer; disulfide-linked. Can heterodimerize with isoform 2 leading to reduced surface expression. Probably forms heterodimers with AOC2. Requires Cu(2+) as cofactor. Ca(2+) is required as a cofactor. It depends on L-topaquinone as a cofactor. Topaquinone (TPQ) is generated by copper-dependent autoxidation of a specific tyrosyl residue. In terms of processing, N- and O-glycosylated. As to expression, strongly expressed on the high endothelial venules of peripheral lymph nodes and on hepatic endothelia. Also highly expressed in appendix, lung and small intestine. Expressed also in adipose tissue, in bone marrow, colon, heart, kidney, ovary, pancreas, placenta, prostate, skeletal muscle, spleen and testis. Isoform 2 seems to be the predominant transcript in fetal kidneys, fetal cartilage and fetal tonsils. The highest relative expression of isoform 2 occurs in skeletal muscle, heart, pancreas, kidney, and lung.

Its subcellular location is the cell membrane. The catalysed reaction is methylamine + O2 + H2O = formaldehyde + H2O2 + NH4(+). It carries out the reaction benzylamine + O2 + H2O = benzaldehyde + H2O2 + NH4(+). The enzyme catalyses 2-phenylethylamine + O2 + H2O = 2-phenylacetaldehyde + H2O2 + NH4(+). Functionally, catalyzes the oxidative deamination of primary amines to the corresponding aldehydes with the concomitant production of hydrogen peroxide and ammonia. Has a preference for the primary monoamines methylamine and benzylamine. Could also act on 2-phenylethylamine but much less efficiently. At endothelial cells surface can also function as a cell adhesion protein that participates in lymphocyte extravasation and recirculation by mediating the binding of lymphocytes to peripheral lymph node vascular endothelial cells in an L-selectin-independent fashion. In terms of biological role, has no semicarbazide-sensitive amine oxidase (SSAO) activity. The chain is Amine oxidase [copper-containing] 3 from Homo sapiens (Human).